A 351-amino-acid chain; its full sequence is Protein Wnt-8a (351 aa).

Residues Met1 to Ser24 form the signal peptide. The cysteines at positions 54 and 65 are disulfide-linked. A glycan (N-linked (GlcNAc...) asparagine) is linked at Asn103. Cystine bridges form between Cys104-Cys112, Cys114-Cys132, Cys180-Cys194, Cys182-Cys189, Cys259-Cys297, Cys275-Cys290, Cys294-Cys336, Cys312-Cys327, Cys314-Cys324, and Cys319-Cys320. The O-palmitoleoyl serine moiety is linked to residue Ser186. 2 N-linked (GlcNAc...) asparagine glycosylation sites follow: Asn262 and Asn281.

It belongs to the Wnt family. In terms of assembly, forms a soluble 1:1 complex with AFM; this prevents oligomerization and is required for prolonged biological activity. The complex with AFM may represent the physiological form in body fluids. In terms of processing, palmitoleoylation is required for efficient binding to frizzled receptors. Depalmitoleoylation leads to Wnt signaling pathway inhibition. Proteolytic processing by TIKI1 and TIKI2 promotes oxidation and formation of large disulfide-bond oligomers, leading to inactivation of WNT8A.

The protein localises to the secreted. It localises to the extracellular space. It is found in the extracellular matrix. Its function is as follows. Ligand for members of the frizzled family of seven transmembrane receptors. Plays a role in embryonic patterning. This chain is Protein Wnt-8a (WNT8A), found in Homo sapiens (Human).